Consider the following 76-residue polypeptide: DNA-directed RNA polymerase subunit Rpo5 (76 aa).

It belongs to the archaeal Rpo5/eukaryotic RPB5 RNA polymerase subunit family. Part of the RNA polymerase complex.

The protein resides in the cytoplasm. The enzyme catalyses RNA(n) + a ribonucleoside 5'-triphosphate = RNA(n+1) + diphosphate. Functionally, DNA-dependent RNA polymerase (RNAP) catalyzes the transcription of DNA into RNA using the four ribonucleoside triphosphates as substrates. In Archaeoglobus fulgidus (strain ATCC 49558 / DSM 4304 / JCM 9628 / NBRC 100126 / VC-16), this protein is DNA-directed RNA polymerase subunit Rpo5.